Reading from the N-terminus, the 199-residue chain is NADH-quinone oxidoreductase subunit C (199 aa).

This sequence belongs to the complex I 30 kDa subunit family. As to quaternary structure, NDH-1 is composed of 14 different subunits. Subunits NuoB, C, D, E, F, and G constitute the peripheral sector of the complex.

It localises to the cell inner membrane. It carries out the reaction a quinone + NADH + 5 H(+)(in) = a quinol + NAD(+) + 4 H(+)(out). Its function is as follows. NDH-1 shuttles electrons from NADH, via FMN and iron-sulfur (Fe-S) centers, to quinones in the respiratory chain. The immediate electron acceptor for the enzyme in this species is believed to be ubiquinone. Couples the redox reaction to proton translocation (for every two electrons transferred, four hydrogen ions are translocated across the cytoplasmic membrane), and thus conserves the redox energy in a proton gradient. In Cupriavidus metallidurans (strain ATCC 43123 / DSM 2839 / NBRC 102507 / CH34) (Ralstonia metallidurans), this protein is NADH-quinone oxidoreductase subunit C.